The chain runs to 130 residues: Follitropin subunit beta (130 aa).

An N-terminal signal peptide occupies residues 1–20; that stretch reads MMKLIQLCILFWCWRAICCH. 6 disulfides stabilise this stretch: Cys-22/Cys-70, Cys-36/Cys-85, Cys-39/Cys-123, Cys-47/Cys-101, Cys-51/Cys-103, and Cys-106/Cys-113. Residues Asn-26 and Asn-43 are each glycosylated (N-linked (GlcNAc...) asparagine).

This sequence belongs to the glycoprotein hormones subunit beta family. Heterodimer. The active follitropin is a heterodimer composed of an alpha chain/CGA shared with other hormones and a unique beta chain/FSHB shown here.

Its subcellular location is the secreted. Functionally, together with the alpha chain CGA constitutes follitropin, the follicle-stimulating hormone, and provides its biological specificity to the hormone heterodimer. Binds FSHR, a G protein-coupled receptor, on target cells to activate downstream signaling pathways. Follitropin is involved in follicle development and spermatogenesis in reproductive organs. In Mus musculus (Mouse), this protein is Follitropin subunit beta (Fshb).